We begin with the raw amino-acid sequence, 493 residues long: Cysteine--tRNA ligase (493 aa).

A Zn(2+)-binding site is contributed by Cys29. Positions 31–41 (VTVYDLSHIGH) match the 'HIGH' region motif. Zn(2+) contacts are provided by Cys209, His234, and Glu238. Residues 266–270 (KMSKS) carry the 'KMSKS' region motif. Lys269 contacts ATP.

Belongs to the class-I aminoacyl-tRNA synthetase family. As to quaternary structure, monomer. It depends on Zn(2+) as a cofactor.

The protein resides in the cytoplasm. It carries out the reaction tRNA(Cys) + L-cysteine + ATP = L-cysteinyl-tRNA(Cys) + AMP + diphosphate. The chain is Cysteine--tRNA ligase from Syntrophobacter fumaroxidans (strain DSM 10017 / MPOB).